The primary structure comprises 239 residues: 2,3,4,5-tetrahydropyridine-2,6-dicarboxylate N-acetyltransferase (239 aa).

Belongs to the transferase hexapeptide repeat family. DapH subfamily.

It carries out the reaction (S)-2,3,4,5-tetrahydrodipicolinate + acetyl-CoA + H2O = L-2-acetamido-6-oxoheptanedioate + CoA. The protein operates within amino-acid biosynthesis; L-lysine biosynthesis via DAP pathway; LL-2,6-diaminopimelate from (S)-tetrahydrodipicolinate (acetylase route): step 1/3. Functionally, catalyzes the transfer of an acetyl group from acetyl-CoA to tetrahydrodipicolinate. The polypeptide is 2,3,4,5-tetrahydropyridine-2,6-dicarboxylate N-acetyltransferase (Staphylococcus aureus (strain Newman)).